A 65-amino-acid polypeptide reads, in one-letter code: Putative potassium channel toxin Ts21 (65 aa).

Residues 1 to 25 form the signal peptide; that stretch reads MNKVYLVAILVLSVLLVANVSPIEG. 3 cysteine pairs are disulfide-bonded: C31-C53, C38-C61, and C42-C63.

This sequence belongs to the short scorpion toxin superfamily. Potassium channel inhibitor family. Alpha-KTx 11 subfamily. Expressed by the venom gland.

Its subcellular location is the secreted. This recombinant toxin inhibits the mammalian voltage-gated potassium channels Kv1.3/KCNA3 in vitro with an IC(50) of 26.40 nM. This Tityus serrulatus (Brazilian scorpion) protein is Putative potassium channel toxin Ts21.